Reading from the N-terminus, the 91-residue chain is Ixochymostatin (91 aa).

The first 20 residues, 1-20, serve as a signal peptide directing secretion; it reads MKTYVLQALLLTLAVAVVRA. 5 cysteine pairs are disulfide-bonded: Cys-34–Cys-70, Cys-43–Cys-66, Cys-48–Cys-62, Cys-53–Cys-90, and Cys-72–Cys-84. The TIL domain maps to 34 to 90; it reads CAEGETWKECVGSSCAELTCEHPEPSLGCTYDCNYGCYCAPDFFRNANKECVKKDKC.

The protein belongs to the serine protease inhibitor-like (TIL domain-containing) family. In terms of tissue distribution, salivary gland. Midgut.

Its subcellular location is the secreted. In terms of biological role, tight-binding competitive inhibitor of chymotrypsin-like proteases; inhibits host chymase, cathepsin G (CTSG) and chymotrypsin. Inhibits chymase-mediated generation of vasoconstrictor peptides: angiotensin II and endothelin I. Reduces chymase-mediated vascular permeability and vascular endothelial-cadherin degradation. The polypeptide is Ixochymostatin (Ixodes scapularis (Black-legged tick)).